Reading from the N-terminus, the 430-residue chain is Enolase (430 aa).

Residue glutamine 162 coordinates (2R)-2-phosphoglycerate. The active-site Proton donor is glutamate 204. The Mg(2+) site is built by aspartate 241, glutamate 283, and aspartate 310. (2R)-2-phosphoglycerate-binding residues include lysine 335, arginine 364, serine 365, and lysine 386. Lysine 335 acts as the Proton acceptor in catalysis.

Belongs to the enolase family. Mg(2+) is required as a cofactor.

The protein localises to the cytoplasm. It is found in the secreted. Its subcellular location is the cell surface. It carries out the reaction (2R)-2-phosphoglycerate = phosphoenolpyruvate + H2O. Its pathway is carbohydrate degradation; glycolysis; pyruvate from D-glyceraldehyde 3-phosphate: step 4/5. Functionally, catalyzes the reversible conversion of 2-phosphoglycerate (2-PG) into phosphoenolpyruvate (PEP). It is essential for the degradation of carbohydrates via glycolysis. This is Enolase from Mycobacteroides abscessus (strain ATCC 19977 / DSM 44196 / CCUG 20993 / CIP 104536 / JCM 13569 / NCTC 13031 / TMC 1543 / L948) (Mycobacterium abscessus).